An 852-amino-acid polypeptide reads, in one-letter code: Carbohydrate-responsive element-binding protein (852 aa).

The segment covering 1–12 has biased composition (low complexity); it reads MAGALAGLAAGL. Disordered regions lie at residues 1–36 and 54–80; these read MAGA…SLRR and VSSP…FGPR. Phosphoserine occurs at positions 20, 23, and 25. Thr27 is subject to Phosphothreonine. Ser29 bears the Phosphoserine mark. Residue Ser196 is modified to Phosphoserine. Disordered regions lie at residues 328 to 365, 486 to 527, and 548 to 648; these read DSLF…CPGP, PCFS…NNPC, and STLL…NKTE. The segment covering 505–521 has biased composition (low complexity); sequence ASPPTLAPATASPPTTA. Polar residues predominate over residues 548-559; it reads STLLRSPGSPQE. Phosphoserine; by AMPK is present on Ser556. Pro residues predominate over residues 568–584; sequence FLPPTPAPTPPRPPPGP. Ser602, Ser614, and Ser631 each carry phosphoserine. The region spanning 649 to 703 is the bHLH domain; that stretch reads NRRITHISAEQKRRFNIKLGFDTLHGLVSTLSAQPSLKVSKATTLQKTAEYILML. The interval 703 to 724 is leucine-zipper; that stretch reads LQQERAGLQEEAQQLRDEIEEL.

Binds DNA as a heterodimer with MLX/TCFL4. Phosphorylation at Ser-556 by AMPK inactivates the DNA-binding activity. In terms of tissue distribution, expressed in liver, heart, kidney, cerebellum and intestinal tissues.

The protein resides in the nucleus. Binds DNA as a heterodimer with MLX/TCFL4 and activates transcription. Binds to the canonical E box sequence 5'-CACGTG-3'. Plays a role in transcriptional activation of glycolytic target genes. Involved in glucose-responsive gene regulation. Regulates transcription in response to changes in cellular carbohydrate abundance such as occurs during fasting to feeding metabolic transition. Refeeding stimulates MLXIPL/ChREBP transcription factor, leading to increased BCKDK to PPM1K expression ratio, phosphorylation and activation of ACLY that ultimately results in the generation of malonyl-CoA and oxaloacetate immediate substrates of de novo lipogenesis and gluconeogenesis, respectively. The protein is Carbohydrate-responsive element-binding protein (MLXIPL) of Homo sapiens (Human).